Consider the following 212-residue polypeptide: Methylthioribulose-1-phosphate dehydratase (212 aa).

Zn(2+) is bound by residues His-97 and His-99.

The protein belongs to the aldolase class II family. MtnB subfamily. Homotetramer. The cofactor is Zn(2+).

It carries out the reaction 5-(methylsulfanyl)-D-ribulose 1-phosphate = 5-methylsulfanyl-2,3-dioxopentyl phosphate + H2O. It functions in the pathway amino-acid biosynthesis; L-methionine biosynthesis via salvage pathway; L-methionine from S-methyl-5-thio-alpha-D-ribose 1-phosphate: step 2/6. In terms of biological role, catalyzes the dehydration of methylthioribulose-1-phosphate (MTRu-1-P) into 2,3-diketo-5-methylthiopentyl-1-phosphate (DK-MTP-1-P). This Bacillus mycoides (strain KBAB4) (Bacillus weihenstephanensis) protein is Methylthioribulose-1-phosphate dehydratase.